The chain runs to 346 residues: Elongation factor Ts (346 aa).

Residues 80-83 are involved in Mg(2+) ion dislocation from EF-Tu; it reads TDFV.

The protein belongs to the EF-Ts family.

The protein resides in the cytoplasm. Associates with the EF-Tu.GDP complex and induces the exchange of GDP to GTP. It remains bound to the aminoacyl-tRNA.EF-Tu.GTP complex up to the GTP hydrolysis stage on the ribosome. In Streptococcus uberis (strain ATCC BAA-854 / 0140J), this protein is Elongation factor Ts.